A 131-amino-acid chain; its full sequence is Protein TAP2 (131 aa).

The N-terminal stretch at 1 to 22 is a signal peptide; sequence MAKSSPTYTVLFLLGLLALSTA. Residues 75 to 101 are disordered; it reads ARSGGETDVKKMEGSMPDQGKTAGRDQ.

Tapetum of anthers.

This Antirrhinum majus (Garden snapdragon) protein is Protein TAP2 (TAP2).